Reading from the N-terminus, the 642-residue chain is Mini-chromosome maintenance complex-binding protein (642 aa).

Positions alanine 151–proline 161 are enriched in polar residues. Residues alanine 151 to arginine 200 are disordered. Position 154 is a phosphoserine (serine 154). Threonine 160 is subject to Phosphothreonine. 2 positions are modified to phosphoserine: serine 167 and serine 298.

Belongs to the MCMBP family. Interacts with the MCM complex: associates with the MCM3-7 complex which lacks MCM2, while it does not interact with the MCM complex when MCM2 is present (MCM2-7 complex). Interacts with the RPA complex, when composed of all RPA1, RPA2 and RPA3 components, but not with RPA1 or RPA2 alone.

It is found in the nucleus. Its function is as follows. Associated component of the MCM complex that acts as a regulator of DNA replication. Binds to the MCM complex during late S phase and promotes the disassembly of the MCM complex from chromatin, thereby acting as a key regulator of pre-replication complex (pre-RC) unloading from replicated DNA. Can dissociate the MCM complex without addition of ATP; probably acts by destabilizing interactions of each individual subunits of the MCM complex. Required for sister chromatid cohesion. The polypeptide is Mini-chromosome maintenance complex-binding protein (Mcmbp) (Rattus norvegicus (Rat)).